Here is a 229-residue protein sequence, read N- to C-terminus: Sec-independent protein translocase protein TatB (229 aa).

The chain crosses the membrane as a helical span at residues 1 to 21 (MFDIGFSELLLFGVIALIVLG). The disordered stretch occupies residues 90 to 131 (EFEHSQSQNLKTSDKAASPANQANNDSAIQNNNEPATFSYAY). The segment covering 108 to 131 (PANQANNDSAIQNNNEPATFSYAY) has biased composition (polar residues).

This sequence belongs to the TatB family. In terms of assembly, the Tat system comprises two distinct complexes: a TatABC complex, containing multiple copies of TatA, TatB and TatC subunits, and a separate TatA complex, containing only TatA subunits. Substrates initially bind to the TatABC complex, which probably triggers association of the separate TatA complex to form the active translocon.

Its subcellular location is the cell inner membrane. Functionally, part of the twin-arginine translocation (Tat) system that transports large folded proteins containing a characteristic twin-arginine motif in their signal peptide across membranes. Together with TatC, TatB is part of a receptor directly interacting with Tat signal peptides. TatB may form an oligomeric binding site that transiently accommodates folded Tat precursor proteins before their translocation. The chain is Sec-independent protein translocase protein TatB from Psychrobacter arcticus (strain DSM 17307 / VKM B-2377 / 273-4).